The chain runs to 153 residues: Transcriptional repressor NrdR 3 (153 aa).

The disordered stretch occupies residues 1-26 (MRCPFCGHDDTQVKDSRPTEDNSAIR). A zinc finger lies at 3-34 (CPFCGHDDTQVKDSRPTEDNSAIRRRRSCPEC). Positions 7-24 (GHDDTQVKDSRPTEDNSA) are enriched in basic and acidic residues. Residues 49 to 139 (LVVIKKDGGR…VYRNFREAKD (91 aa)) enclose the ATP-cone domain.

This sequence belongs to the NrdR family. Zn(2+) serves as cofactor.

Negatively regulates transcription of bacterial ribonucleotide reductase nrd genes and operons by binding to NrdR-boxes. This chain is Transcriptional repressor NrdR 3, found in Paramagnetospirillum magneticum (strain ATCC 700264 / AMB-1) (Magnetospirillum magneticum).